We begin with the raw amino-acid sequence, 729 residues long: Ribosomal RNA large subunit methyltransferase K/L (729 aa).

Positions 47 to 158 constitute a THUMP domain; sequence TFYRLCLWSR…KNELTLALDL (112 aa).

This sequence belongs to the methyltransferase superfamily. RlmKL family.

It localises to the cytoplasm. It carries out the reaction guanosine(2445) in 23S rRNA + S-adenosyl-L-methionine = N(2)-methylguanosine(2445) in 23S rRNA + S-adenosyl-L-homocysteine + H(+). The catalysed reaction is guanosine(2069) in 23S rRNA + S-adenosyl-L-methionine = N(2)-methylguanosine(2069) in 23S rRNA + S-adenosyl-L-homocysteine + H(+). Functionally, specifically methylates the guanine in position 2445 (m2G2445) and the guanine in position 2069 (m7G2069) of 23S rRNA. The polypeptide is Ribosomal RNA large subunit methyltransferase K/L (Dichelobacter nodosus (strain VCS1703A)).